The following is a 206-amino-acid chain: UPF0502 protein Acid_1185 (206 aa).

Belongs to the UPF0502 family.

This Solibacter usitatus (strain Ellin6076) protein is UPF0502 protein Acid_1185.